We begin with the raw amino-acid sequence, 333 residues long: Eukaryotic translation initiation factor 3 subunit H-B (333 aa).

Residues 20–154 form the MPN domain; sequence IQIEGLVVMK…LKAYRLTPKL (135 aa). Positions 249 to 295 are disordered; that stretch reads SKQQQQKHQYVQRRQQENAQRQSRGEPPLPEEDLTKMFKPPQPPPRM. Over residues 250 to 261 the composition is skewed to low complexity; that stretch reads KQQQQKHQYVQR.

This sequence belongs to the eIF-3 subunit H family. In terms of assembly, component of the eukaryotic translation initiation factor 3 (eIF-3) complex, which is composed of 13 subunits: eif3a, eif3b, eif3c, eif3d, eif3e, eif3f, eif3g, eif3h, eif3i, eif3j, eif3k, eif3l and eif3m.

The protein resides in the cytoplasm. In terms of biological role, component of the eukaryotic translation initiation factor 3 (eIF-3) complex, which is involved in protein synthesis of a specialized repertoire of mRNAs and, together with other initiation factors, stimulates binding of mRNA and methionyl-tRNAi to the 40S ribosome. The eIF-3 complex specifically targets and initiates translation of a subset of mRNAs involved in cell proliferation. The protein is Eukaryotic translation initiation factor 3 subunit H-B (eif3hb) of Danio rerio (Zebrafish).